The sequence spans 731 residues: Catalase-peroxidase (731 aa).

The segment at 1-24 (MSTEPNCPFSGNARKHTAAGAPSN) is disordered. The tryptophyl-tyrosyl-methioninium (Trp-Tyr) (with M-245) cross-link spans 96–219 (WHSAGTYRVS…LGAVQMGLIY (124 aa)). The active-site Proton acceptor is His-97. Residues 219–245 (YVNPEGPNGNPDPIAAARDIRETFARM) constitute a cross-link (tryptophyl-tyrosyl-methioninium (Tyr-Met) (with W-96)). His-260 provides a ligand contact to heme b. Positions 339–365 (GAQQWKPKGDAGAGTVPDAHDPSKRHA) are disordered.

It belongs to the peroxidase family. Peroxidase/catalase subfamily. In terms of assembly, homodimer or homotetramer. It depends on heme b as a cofactor. Post-translationally, formation of the three residue Trp-Tyr-Met cross-link is important for the catalase, but not the peroxidase activity of the enzyme.

It carries out the reaction H2O2 + AH2 = A + 2 H2O. The enzyme catalyses 2 H2O2 = O2 + 2 H2O. Functionally, bifunctional enzyme with both catalase and broad-spectrum peroxidase activity. This chain is Catalase-peroxidase, found in Polaromonas sp. (strain JS666 / ATCC BAA-500).